The primary structure comprises 486 residues: Intermediate cleaving peptidase 55 (486 aa).

The transit peptide at 1-19 (MSGYIRTLFIRNRFSNYRL) directs the protein to the mitochondrion. D317, D328, H407, E434, and E457 together coordinate Mn(2+).

Belongs to the peptidase M24B family. The cofactor is Mn(2+).

It localises to the mitochondrion inner membrane. The enzyme catalyses The enzyme cleaves the 36-Pro-Pro-37 bond of cysteine desulfurase (EC 2.8.1.7) removing three amino acid residues (Tyr-Ser-Pro) from the N-terminus after cleavage by mitochondrial processing peptidase.. In terms of biological role, aminopeptidase which cleaves preprotein intermediates that carry destabilizing N-ter amino acid residues after the mitochondrial processing peptidase (MPP) cleavage site and is thus critical for stabilization of the mitochondrial proteome. The protein is Intermediate cleaving peptidase 55 (icp55) of Schizosaccharomyces pombe (strain 972 / ATCC 24843) (Fission yeast).